We begin with the raw amino-acid sequence, 118 residues long: Alpha-amylase inhibitor 4 (118 aa).

4 disulfides stabilise this stretch: Cys7/Cys60, Cys21/Cys49, Cys30/Cys82, and Cys50/Cys101.

This sequence belongs to the protease inhibitor I6 (cereal trypsin/alpha-amylase inhibitor) family.

Its subcellular location is the secreted. Alpha-amylase inhibitor. The polypeptide is Alpha-amylase inhibitor 4 (Sorghum bicolor (Sorghum)).